The sequence spans 193 residues: Xanthine phosphoribosyltransferase (193 aa).

The xanthine site is built by leucine 20 and threonine 27. 5-phospho-alpha-D-ribose 1-diphosphate is bound at residue 128 to 132 (ANGQA). Lysine 156 is a xanthine binding site.

This sequence belongs to the purine/pyrimidine phosphoribosyltransferase family. Xpt subfamily. As to quaternary structure, homodimer.

The protein resides in the cytoplasm. The catalysed reaction is XMP + diphosphate = xanthine + 5-phospho-alpha-D-ribose 1-diphosphate. The protein operates within purine metabolism; XMP biosynthesis via salvage pathway; XMP from xanthine: step 1/1. Its function is as follows. Converts the preformed base xanthine, a product of nucleic acid breakdown, to xanthosine 5'-monophosphate (XMP), so it can be reused for RNA or DNA synthesis. This is Xanthine phosphoribosyltransferase from Streptococcus agalactiae serotype Ia (strain ATCC 27591 / A909 / CDC SS700).